A 245-amino-acid chain; its full sequence is tRNA pseudouridine synthase A (245 aa).

Aspartate 52 (nucleophile) is an active-site residue. Tyrosine 111 lines the substrate pocket.

It belongs to the tRNA pseudouridine synthase TruA family. In terms of assembly, homodimer.

It carries out the reaction uridine(38/39/40) in tRNA = pseudouridine(38/39/40) in tRNA. In terms of biological role, formation of pseudouridine at positions 38, 39 and 40 in the anticodon stem and loop of transfer RNAs. The polypeptide is tRNA pseudouridine synthase A (Bradyrhizobium diazoefficiens (strain JCM 10833 / BCRC 13528 / IAM 13628 / NBRC 14792 / USDA 110)).